A 235-amino-acid chain; its full sequence is Uridylate kinase (235 aa).

An ATP-binding site is contributed by 8–11 (KFSG). An involved in allosteric activation by GTP region spans residues 16–21 (GAEGYG). A UMP-binding site is contributed by G50. 2 residues coordinate ATP: G51 and R55. UMP contacts are provided by residues D71 and 132-139 (TGNPYFTT). The ATP site is built by T159, Y165, and D168.

This sequence belongs to the UMP kinase family. In terms of assembly, homohexamer.

The protein resides in the cytoplasm. It catalyses the reaction UMP + ATP = UDP + ADP. It participates in pyrimidine metabolism; CTP biosynthesis via de novo pathway; UDP from UMP (UMPK route): step 1/1. With respect to regulation, allosterically activated by GTP. Inhibited by UTP. In terms of biological role, catalyzes the reversible phosphorylation of UMP to UDP. This Aliarcobacter butzleri (strain RM4018) (Arcobacter butzleri) protein is Uridylate kinase.